Consider the following 66-residue polypeptide: MGKVHGGLNRAGKVRNATPKKDKEEKRKPKVGRAKKRMIFNRRNVAAVAGFGKKKGYNTQNVPTVA.

Residues 1-35 (MGKVHGGLNRAGKVRNATPKKDKEEKRKPKVGRAK) are disordered.

Belongs to the eukaryotic ribosomal protein eS30 family.

This is Small ribosomal subunit protein eS30 (rps30-1) from Dictyostelium discoideum (Social amoeba).